The following is a 431-amino-acid chain: Phosphomethylpyrimidine synthase (431 aa).

Residues Asn66, Met95, Tyr124, His163, 185 to 187, 226 to 229, and Glu265 contribute to the substrate site; these read SRG and DGLR. His269 lines the Zn(2+) pocket. Tyr292 is a substrate binding site. His333 is a Zn(2+) binding site. [4Fe-4S] cluster is bound by residues Cys408, Cys411, and Cys415.

It belongs to the ThiC family. Requires [4Fe-4S] cluster as cofactor.

The catalysed reaction is 5-amino-1-(5-phospho-beta-D-ribosyl)imidazole + S-adenosyl-L-methionine = 4-amino-2-methyl-5-(phosphooxymethyl)pyrimidine + CO + 5'-deoxyadenosine + formate + L-methionine + 3 H(+). It functions in the pathway cofactor biosynthesis; thiamine diphosphate biosynthesis. Functionally, catalyzes the synthesis of the hydroxymethylpyrimidine phosphate (HMP-P) moiety of thiamine from aminoimidazole ribotide (AIR) in a radical S-adenosyl-L-methionine (SAM)-dependent reaction. The protein is Phosphomethylpyrimidine synthase of Dehalococcoides mccartyi (strain CBDB1).